We begin with the raw amino-acid sequence, 534 residues long: DM7 family protein GE17491 (534 aa).

It belongs to the DM7 family.

This chain is DM7 family protein GE17491, found in Drosophila yakuba (Fruit fly).